We begin with the raw amino-acid sequence, 193 residues long: Acyl carrier protein phosphodiesterase (193 aa).

It belongs to the AcpH family.

It carries out the reaction holo-[ACP] + H2O = apo-[ACP] + (R)-4'-phosphopantetheine + H(+). Its function is as follows. Converts holo-ACP to apo-ACP by hydrolytic cleavage of the phosphopantetheine prosthetic group from ACP. The sequence is that of Acyl carrier protein phosphodiesterase from Klebsiella pneumoniae subsp. pneumoniae (strain ATCC 700721 / MGH 78578).